Reading from the N-terminus, the 249-residue chain is Low affinity immunoglobulin gamma Fc region receptor III-A (249 aa).

Residues 1–20 form the signal peptide; the sequence is MWYLLLPTALLLTVSSGVGA. At 21 to 203 the chain is on the extracellular side; that stretch reads GLQKAVVNLD…SPSSFLPWHQ (183 aa). 2 Ig-like C2-type domains span residues 31–103 and 117–188; these read PEWV…QLDV and FQEG…LQIS. Intrachain disulfides connect C46-C88 and C127-C171. N55 and N62 each carry an N-linked (GlcNAc...) asparagine glycan. N-linked (GlcNAc...) asparagine glycosylation is present at N179. A helical transmembrane segment spans residues 204–224; the sequence is ITFCLLIGLLFAIDTVLYFSV. Residues 225 to 249 lie on the Cytoplasmic side of the membrane; the sequence is QRSLQSSVAVYEEPKLHWSKEPQDK. Phosphotyrosine is present on Y235.

As to quaternary structure, forms a heterooligomeric complex with ITAM-containing signaling subunits FCER1G. Interacts (via transmembrane domain) with signaling subunits; this interaction is a prerequisite for receptor complex expression on the cell surface and intracellular signal transduction. Binds the Fc region of antigen-complexed IgG. N-glycosylated. In terms of processing, phosphorylated following receptor ligation.

The protein localises to the cell membrane. Functionally, receptor for the invariable Fc fragment of immunoglobulin gamma (IgG). Binds with intermediate affinity to both IgG2a and IgG2b. Can bind to IgG2a and IgG2b monomers. Does not display binding to IgG1 or IgG3. Recognizes neutralizing virus-specific IgGs displayed on the cell surface of infected cells and triggers antibody-dependent cellular cytotoxicity (ADCC). Confers protection to lethal influenza virus infection. On splenic dendritic cells, uptakes antigen immune complexes and efficiently divert them into MHC class I and II antigen presentation pathways to provide for superior priming of CD4-positive and CD8-positive T cell immune responses. Mediates neutrophil activation by IgG complexes redundantly with FCGR2A. Plays a role in promoting bone resorption by enhancing osteoclast differentiation following binding to IgG2a. Also acts as a receptor for the Fc region of immunoglobulin epsilon (IgE). Binds with low affinity to both the a and b allotypes of IgE. Has also been shown to bind to IgE allotype a only but not to allotype b. Binds aggregated IgE but not the monomeric form and bound monomeric IgG is readily displaced by IgE complexes. Binding to IgE promotes macrophage-mediated phagocytosis, antigen presentation to T cells, production of pro-inflammatory cytokines and the late phase of cutaneous allergic reactions. Mediates enhanced ADCC in response to afucosylated IgGs. This is Low affinity immunoglobulin gamma Fc region receptor III-A from Rattus norvegicus (Rat).